A 51-amino-acid chain; its full sequence is Small integral membrane protein 38 (51 aa).

The chain crosses the membrane as a helical span at residues 13 to 33 (PLLALLVVILLARLILWSCLG).

The protein localises to the membrane. The sequence is that of Small integral membrane protein 38 from Homo sapiens (Human).